Consider the following 152-residue polypeptide: Eukaryotic translation initiation factor 2 subunit 3 (152 aa).

A1 carries the N-acetylalanine modification. 51 to 54 (NKID) lines the GTP pocket.

The protein belongs to the TRAFAC class translation factor GTPase superfamily. Classic translation factor GTPase family. EIF2G subfamily. In terms of assembly, eukaryotic translation initiation factor 2 eIF2 is a heterotrimeric complex composed of an alpha (EIF2S1), a beta (EIF2S2) and a gamma (EIF2S3) chain. eIF2 is member of the 43S pre-initiation complex (43S PIC). Interacts (via C-terminus) with CDC123; the interaction is direct.

Its subcellular location is the cytoplasm. The protein localises to the cytosol. In terms of biological role, member of the eIF2 complex that functions in the early steps of protein synthesis by forming a ternary complex with GTP and initiator tRNA. This complex binds to a 40S ribosomal subunit, followed by mRNA binding to form the 43S pre-initiation complex (43S PIC). Junction of the 60S ribosomal subunit to form the 80S initiation complex is preceded by hydrolysis of the GTP bound to eIF2 and release of an eIF2-GDP binary complex. In order for eIF2 to recycle and catalyze another round of initiation, the GDP bound to eIF2 must exchange with GTP by way of a reaction catalyzed by eIF-2B. In Oryctolagus cuniculus (Rabbit), this protein is Eukaryotic translation initiation factor 2 subunit 3 (EIF2S3).